A 376-amino-acid polypeptide reads, in one-letter code: MAEERPGAWFGFGFCGFGQELGSGRGRQVHSPSPLRAGVDICRVSASWSYTAFVTRGGRLELSGSASGAAGRCKDAWASEGLLAVLRAGPGPEALLQVWAAESALRGEPLWAQNVVPEAEGEDDPAGEAQAGRLPLLPCARAYVSPRAPFYRPLAPELRARQLELGAEHALLLDAAGQVFSWGGGRHGQLGHGTLEAELEPRLLEALQGLVMAEVAAGGWHSVCVSETGDIYIWGWNESGQLALPTRNLAEDGETVAREATELNEDGSQVKRTGGAEDGAPAPFIAVQPFPALLDLPMGSDAVKASCGSRHTAVVTRTGELYTWGWGKYGQLGHEDTTSLDRPRRVEYFVDKQLQVKAVTCGPWNTYVYAVEKGKS.

The segment at 1 to 169 (MAEERPGAWF…ARQLELGAEH (169 aa)) is interaction with KDM8. Residues 6 to 56 (PGAWFGFGFCGFGQELGSGRGRQVHSPSPLRAGVDICRVSASWSYTAFVTR) form an RCC1 1 repeat. Position 141 is a (3R)-3-hydroxyarginine (arginine 141). 3 RCC1 repeats span residues 176–227 (AGQV…CVSE), 229–317 (GDIY…VVTR), and 318–371 (TGEL…VYAV).

Found in a complex with KDM8. Interacts (via N-terminus) with KDM8 (via N-terminus). In terms of processing, specifically hydroxylated (with R stereochemistry) at C-3 of ARG-141 by KDM8.

The protein localises to the chromosome. Functionally, plays a role in transcriptional repression of satellite repeats, possibly by regulating H3K36 methylation levels in centromeric regions together with KDM8. Possibly together with KDM8, is involved in proper mitotic spindle organization and chromosome segregation. Plays a role in regulating alpha-tubulin deacetylation and cytoskeletal microtubule stability, thereby promoting cell migration and TGF-beta-induced epithelial to mesenchymal transition (EMT), potentially through the inhibition of KDM8. The sequence is that of RCC1 domain-containing protein 1 from Homo sapiens (Human).